A 511-amino-acid chain; its full sequence is Cobyric acid synthase (511 aa).

A GATase cobBQ-type domain is found at 251-443 (LLDIAIICLP…IHGIFDNDVF (193 aa)). Cys-332 (nucleophile) is an active-site residue. The active site involves His-435.

It belongs to the CobB/CobQ family. CobQ subfamily.

It participates in cofactor biosynthesis; adenosylcobalamin biosynthesis. Functionally, catalyzes amidations at positions B, D, E, and G on adenosylcobyrinic A,C-diamide. NH(2) groups are provided by glutamine, and one molecule of ATP is hydrogenolyzed for each amidation. The protein is Cobyric acid synthase of Listeria monocytogenes serotype 4b (strain CLIP80459).